Here is a 468-residue protein sequence, read N- to C-terminus: Ubiquitin carboxyl-terminal hydrolase 17-like protein B (468 aa).

Residues 1–20 (MVVALSFPEADPAMSPPSAP) are disordered. The USP domain occupies 51–348 (CGLQNTGNSC…NAYVLFYVQQ (298 aa)). C60 serves as the catalytic Nucleophile. The active-site Proton acceptor is the H307. The tract at residues 374-449 (KKSGEKKHNK…GGQNLRNTEG (76 aa)) is disordered. The span at 394-403 (CENREKRSSK) shows a compositional bias: basic and acidic residues. Polar residues predominate over residues 422–434 (GQKQENTKLTPQE).

The protein belongs to the peptidase C19 family. USP17 subfamily. Post-translationally, ubiquitinated. In terms of tissue distribution, detected in brain, heart, liver, lung, kidney, ovary and spleen.

It catalyses the reaction Thiol-dependent hydrolysis of ester, thioester, amide, peptide and isopeptide bonds formed by the C-terminal Gly of ubiquitin (a 76-residue protein attached to proteins as an intracellular targeting signal).. With respect to regulation, inhibited by ubiquitin aldehyde. Functionally, deubiquitinating enzyme that removes conjugated ubiquitin from specific proteins to regulate different cellular processes. The sequence is that of Ubiquitin carboxyl-terminal hydrolase 17-like protein B from Mus musculus (Mouse).